Consider the following 351-residue polypeptide: MVSMEESSVFDYIRENRRTIVLSFLAVAVVIFLIGFFAGFGDILRALEGTSPYFLALNFVLEAIILILWTLRWRLILNVVDDAPSFPRLMMLLFTSIFGNNITPGAAGGEPLRAYLLREVEGTPFEIGFASSTADRVFEFIPFALISILSAVLIMTWEISIWTRIVVSVLILVTIAGFSLAVYAGMNKKIAQRIALSVTRRLVSWFSRFREGGISFAGIHEKVIFYINRFNDGFSTAITDRRVFVIGFFISLGMWALDVCRLYVCFLAVGVSPPAVPLIIIYTVGILISLLPILPGSLGLREGILVGLFAVAGIGADYVMAASVVDRIASYIAPTLIGLIAAIYYGKQMTS.

8 helical membrane passes run 20–40 (IVLS…FAGF), 51–71 (SPYF…LWTL), 137–157 (VFEF…IMTW), 165–185 (IVVS…VYAG), 244–264 (FVIG…RLYV), 275–295 (AVPL…PILP), 304–324 (ILVG…AASV), and 328–348 (IASY…YGKQ).

It belongs to the UPF0104 family.

It localises to the cell membrane. This chain is UPF0104 membrane protein MTH_887, found in Methanothermobacter thermautotrophicus (strain ATCC 29096 / DSM 1053 / JCM 10044 / NBRC 100330 / Delta H) (Methanobacterium thermoautotrophicum).